A 265-amino-acid chain; its full sequence is Homeobox protein CDX-1 (265 aa).

The segment at 9-153 (KDSPVYPGPA…GGGGSGKTRT (145 aa)) is disordered. The segment covering 30-42 (YGPPAPPPAPPQY) has biased composition (pro residues). The span at 73-92 (AAAYGPGPAAPAASPASLAF) shows a compositional bias: low complexity. Residues 93 to 108 (GPPPDFSPVPAPPGPG) show a composition bias toward pro residues. A compositionally biased stretch (low complexity) spans 110–126 (GLLAQPLGGPGTPSSPG). Positions 154 to 213 (KDKYRVVYTDHQRLELEKEFHYSRYITIRRKSELAANLGLTERQVKIWFQNRRAKERKVN) form a DNA-binding region, homeobox. The segment at 157-178 (YRVVYTDHQRLELEKEFHYSRY) is interaction with DNA. The segment at 196–207 (RQVKIWFQNRRA) is interaction with 5-mCpG DNA. Over residues 207–217 (AKERKVNKKKQ) the composition is skewed to basic residues. The disordered stretch occupies residues 207–265 (AKERKVNKKKQQQQQPPQPPMAHDITATPAGPSLGGLCPSNTSLLATSSPMPVKEEFLP). Residues 245-256 (PSNTSLLATSSP) show a composition bias toward polar residues.

The protein belongs to the Caudal homeobox family. In terms of tissue distribution, intestinal epithelium.

It localises to the nucleus. Its function is as follows. Plays a role in transcriptional regulation. Involved in activated KRAS-mediated transcriptional activation of PRKD1 in colorectal cancer (CRC) cells. Binds to the PRKD1 promoter in colorectal cancer (CRC) cells. Could play a role in the terminal differentiation of the intestine. Binds preferentially to methylated DNA. In Homo sapiens (Human), this protein is Homeobox protein CDX-1 (CDX1).